We begin with the raw amino-acid sequence, 373 residues long: D-alanine--D-alanine ligase (373 aa).

The region spanning 156-363 (KKLLAAEGLP…YPTLLAAMVD (208 aa)) is the ATP-grasp domain. An ATP-binding site is contributed by 184 to 239 (RERLGLPVFVKPARGGSSIGVSRVTAWDELPAAVALARRHDPKVIVEAAVIGRELE). Mg(2+) is bound by residues Asp-318, Glu-330, and Asn-332.

It belongs to the D-alanine--D-alanine ligase family. Mg(2+) serves as cofactor. Mn(2+) is required as a cofactor.

The protein resides in the cytoplasm. The enzyme catalyses 2 D-alanine + ATP = D-alanyl-D-alanine + ADP + phosphate + H(+). Its pathway is cell wall biogenesis; peptidoglycan biosynthesis. In terms of biological role, cell wall formation. The sequence is that of D-alanine--D-alanine ligase from Mycolicibacterium smegmatis (strain ATCC 700084 / mc(2)155) (Mycobacterium smegmatis).